The sequence spans 427 residues: Homeobox protein knotted-1-like 3 (427 aa).

Disordered regions lie at residues glutamine 19–proline 49 and threonine 272–glutamine 291. Residues threonine 272–methionine 284 are compositionally biased toward polar residues. An ELK domain is found at glutamate 330–isoleucine 350. Residues leucine 351–asparagine 414 constitute a DNA-binding region (homeobox; TALE-type).

It belongs to the TALE/KNOX homeobox family. As to expression, maximally expressed in sepals, petals and fully expanded leaves. Also expressed in other flower organs and in developing leaves. Low level expression in stem internodes.

It is found in the nucleus. This chain is Homeobox protein knotted-1-like 3, found in Malus domestica (Apple).